Here is a 239-residue protein sequence, read N- to C-terminus: Ribonuclease 3 (239 aa).

Positions 11 to 133 constitute an RNase III domain; it reads HAAIQKKLGY…MFAAVSFDAD (123 aa). Glu46 lines the Mg(2+) pocket. Asp50 is an active-site residue. 2 residues coordinate Mg(2+): Asp119 and Glu122. A DRBM domain is found at 160–230; that stretch reads DGKTALQEAL…AKEALKWLEE (71 aa).

This sequence belongs to the ribonuclease III family. In terms of assembly, homodimer. It depends on Mg(2+) as a cofactor.

It localises to the cytoplasm. The catalysed reaction is Endonucleolytic cleavage to 5'-phosphomonoester.. Its function is as follows. Digests double-stranded RNA. Involved in the processing of primary rRNA transcript to yield the immediate precursors to the large and small rRNAs (23S and 16S). Also processes some mRNAs, and tRNAs when they are encoded in the rRNA operon. Functionally, CRISPR (clustered regularly interspaced short palindromic repeat) is an adaptive immune system that provides protection against mobile genetic elements (viruses, transposable elements and conjugative plasmids). CRISPR clusters contain spacers, sequences complementary to antecedent mobile elements, and target invading nucleic acids. CRISPR clusters are transcribed and processed into CRISPR RNA (crRNA). In this organism endogenous ribonuclease 3 and Cas9 are required for correct coprocessing of pre-crRNA and the trans-encoded small RNA (tracrRNA). Cas9, crRNA and tracRNA are required for cleavage of invading DNA. Involved in 3'-end processing but not 5'-end processing of crRNA and tracrRNA. The sequence is that of Ribonuclease 3 from Neisseria meningitidis serogroup C (strain 8013).